The sequence spans 99 residues: Malonate decarboxylase acyl carrier protein (99 aa).

At Ser25 the chain carries O-(phosphoribosyl dephospho-coenzyme A)serine.

It belongs to the MdcC family. Post-translationally, covalently binds the prosthetic group of malonate decarboxylase.

The protein localises to the cytoplasm. In terms of biological role, subunit of malonate decarboxylase, it is an acyl carrier protein to which acetyl and malonyl thioester residues are bound via a 2'-(5''-phosphoribosyl)-3'-dephospho-CoA prosthetic group and turn over during the catalytic mechanism. In Azotobacter vinelandii (strain DJ / ATCC BAA-1303), this protein is Malonate decarboxylase acyl carrier protein.